Reading from the N-terminus, the 352-residue chain is Small ribosomal subunit biogenesis GTPase RsgA (352 aa).

Residues 109-277 enclose the CP-type G domain; sequence DTVLKRPDMY…LIDSPGIREF (169 aa). Residues 165–168 and 219–227 contribute to the GTP site; these read NKAD and GQSGVGKSS. Positions 301, 306, 308, and 314 each coordinate Zn(2+).

The protein belongs to the TRAFAC class YlqF/YawG GTPase family. RsgA subfamily. Monomer. Associates with 30S ribosomal subunit, binds 16S rRNA. The cofactor is Zn(2+).

The protein resides in the cytoplasm. Functionally, one of several proteins that assist in the late maturation steps of the functional core of the 30S ribosomal subunit. Helps release RbfA from mature subunits. May play a role in the assembly of ribosomal proteins into the subunit. Circularly permuted GTPase that catalyzes slow GTP hydrolysis, GTPase activity is stimulated by the 30S ribosomal subunit. In Alcanivorax borkumensis (strain ATCC 700651 / DSM 11573 / NCIMB 13689 / SK2), this protein is Small ribosomal subunit biogenesis GTPase RsgA.